We begin with the raw amino-acid sequence, 484 residues long: MKFIVKLFPEIMMKSKPVRMRFTKMLETNIRNVLKKVDETAKVKREWDKIMVLVPDDRQDLVEAFAERLACIPGIAHVLQVSESTFESVDDIYQQTLAVYKDELAGKTFCVRVKRVGNHDFRSIEVERYVGGGLNQFTEAAGVRLKNPDMTINLEIDKESLYLVSKRIEGLGGYPMATQEDVLSLISGGFDSGVSSYQFIKRGSRTHYCFFNLGGDQHEIGVKQVAYHLWQKYGESHKVKFISIPFDPVVTEILEKIDNGQMGVILKRMMMRAAAKVARKMGIQALVTGEAMGQVSSQTLTNLSIIDRCTDQLILRPLIAMDKQDIINLSRKIGTEDLSKSIPEYCGVISQRPTVKAVLSKIEAEELKFSEDLIDRVIEAAEVIDIREIATSMDTKITSTETVGDINSGEVIIDVRAPEEEEQSPLEVEGVEVKAIPFFRLATKFADLDKSKTYLLYCDRGVMSKLQALYLQEQGYDNVKVYRP.

The 105-residue stretch at Glu-63–Arg-167 folds into the THUMP domain. ATP-binding positions include Leu-185–Ile-186, Lys-267, Gly-289, and Gln-298. The cysteines at positions 346 and 458 are disulfide-linked. The Rhodanese domain occupies Ile-406–Pro-484. The Cysteine persulfide intermediate role is filled by Cys-458.

Belongs to the ThiI family.

It localises to the cytoplasm. The enzyme catalyses [ThiI sulfur-carrier protein]-S-sulfanyl-L-cysteine + a uridine in tRNA + 2 reduced [2Fe-2S]-[ferredoxin] + ATP + H(+) = [ThiI sulfur-carrier protein]-L-cysteine + a 4-thiouridine in tRNA + 2 oxidized [2Fe-2S]-[ferredoxin] + AMP + diphosphate. The catalysed reaction is [ThiS sulfur-carrier protein]-C-terminal Gly-Gly-AMP + S-sulfanyl-L-cysteinyl-[cysteine desulfurase] + AH2 = [ThiS sulfur-carrier protein]-C-terminal-Gly-aminoethanethioate + L-cysteinyl-[cysteine desulfurase] + A + AMP + 2 H(+). It participates in cofactor biosynthesis; thiamine diphosphate biosynthesis. Catalyzes the ATP-dependent transfer of a sulfur to tRNA to produce 4-thiouridine in position 8 of tRNAs, which functions as a near-UV photosensor. Also catalyzes the transfer of sulfur to the sulfur carrier protein ThiS, forming ThiS-thiocarboxylate. This is a step in the synthesis of thiazole, in the thiamine biosynthesis pathway. The sulfur is donated as persulfide by IscS. This is tRNA sulfurtransferase from Shewanella woodyi (strain ATCC 51908 / MS32).